The sequence spans 349 residues: MKLHQGLVCLSVLILLPTCILGDRKFEVYWNIPTFMCPDQNKTIMDLNKKHGVIQNTEDLFRGDKISLLYHPGAFPAITRNKTTNTLIYENGGVPQAGNLSLHLKLLEKDINEQITDKNFSGLAVIDFELWRPIFRQNGGSLSDYQNLSLKLEKDLHPEFNEDQLRKEAERRIEKFGRSFIKQTLIKAKKLRPKAQWGYYAFPYCFNGRRRYVDTCIPSAKIDNDRILYMFENSDVIYPAVYLQTDLAQKNQTGLVKGRVDEAVRMAKMVKKPAKPPVLVYHRYVFTDTLEYISKENTTAVFKAMKDNGADGVIIWGSSFDLNSKEKCAKFLDYLREVLWPVIDEVKRS.

Residues 1–25 (MKLHQGLVCLSVLILLPTCILGDRK) form the signal peptide. Disulfide bonds link Cys37–Cys328 and Cys205–Cys216. Asn41, Asn81, Asn99, and Asn119 each carry an N-linked (GlcNAc...) asparagine glycan. Residue Glu129 is the Proton donor of the active site. N-linked (GlcNAc...) asparagine glycosylation is present at Asn147. Residues Asn251 and Asn297 are each glycosylated (N-linked (GlcNAc...) asparagine).

This sequence belongs to the glycosyl hydrolase 56 family. In terms of tissue distribution, expressed in salivary glands.

The protein resides in the secreted. The enzyme catalyses Random hydrolysis of (1-&gt;4)-linkages between N-acetyl-beta-D-glucosamine and D-glucuronate residues in hyaluronate.. Its function is as follows. Hydrolyzes high molecular weight hyaluronic acid to produce small oligosaccharides. The chain is Hyaluronidase Tab y 2.0101 from Tabanus yao (Horsefly).